We begin with the raw amino-acid sequence, 287 residues long: mRNA-capping enzyme regulatory subunit OPG124 (287 aa).

It belongs to the orthopoxvirus mRNA-capping enzyme regulatory subunit family. As to quaternary structure, interacts with the catalytic subunit OPG113.

It localises to the virion. Regulatory subunit of the mRNA cap enzyme which stabilizes the catalytic subunit and enhances its methyltransferase activity through an allosteric mechanism. Heterodimeric mRNA capping enzyme catalyzes the linkage of a N7-methyl-guanosine moiety to the first transcribed nucleotide (cap 0 structure), whereas the methyltransferase OPG102 is responsible for a second methylation at the 2'-O position of the ribose (cap 1 structure). Also involved in early viral gene transcription termination and intermediate viral gene transcription initiation. Early gene transcription termination requires the termination factor VTF, the DNA-dependent ATPase NPH-I/OPG123 and the RAP94/OPG109 subunit of the viral RNA polymerase, as well as the presence of a specific termination motif. Binds, together with RAP94/OPG109, to the termination motif 5'-UUUUUNU-3' in the nascent early mRNA. The chain is mRNA-capping enzyme regulatory subunit OPG124 (OPG124) from Variola virus (isolate Human/India/Ind3/1967) (VARV).